We begin with the raw amino-acid sequence, 99 residues long: Class II hydrophobin B (99 aa).

The first 15 residues, 1–15, serve as a signal peptide directing secretion; that stretch reads MKFFAIAALFAGALA. Cystine bridges form between Cys-30–Cys-79 and Cys-40–Cys-70.

The protein belongs to the cerato-ulmin hydrophobin family.

It is found in the secreted. The protein localises to the cell wall. The protein resides in the vacuole. It localises to the cytoplasmic vesicle. In terms of biological role, aerial growth, conidiation, and dispersal of filamentous fungi in the environment rely upon a capability of their secreting small amphipathic proteins called hydrophobins (HPBs) with low sequence identity. Class I can self-assemble into an outermost layer of rodlet bundles on aerial cell surfaces, conferring cellular hydrophobicity that supports fungal growth, development and dispersal; whereas Class II form highly ordered films at water-air interfaces through intermolecular interactions but contribute nothing to the rodlet structure. Hyd2B contributes to certain cell wall-related features, such as hydrophobicity but is not involved in cell wall-related events during fungal proliferation in host hemocoel. Does not contribute to conidial hydrophobicity. Involved in insect hemocoel colonization independent of cell hydrophobicity. In Beauveria bassiana (strain ARSEF 2860) (White muscardine disease fungus), this protein is Class II hydrophobin B.